Reading from the N-terminus, the 498-residue chain is Probable malate:quinone oxidoreductase (498 aa).

It belongs to the MQO family. FAD is required as a cofactor.

The enzyme catalyses (S)-malate + a quinone = a quinol + oxaloacetate. It participates in carbohydrate metabolism; tricarboxylic acid cycle; oxaloacetate from (S)-malate (quinone route): step 1/1. The protein is Probable malate:quinone oxidoreductase of Prochlorococcus marinus (strain AS9601).